We begin with the raw amino-acid sequence, 755 residues long: Photosystem I P700 chlorophyll a apoprotein A1 (755 aa).

The next 8 helical transmembrane spans lie at isoleucine 72 to alanine 95, leucine 158 to histidine 181, leucine 197 to isoleucine 221, glutamine 297 to tyrosine 315, tryptophan 352 to tyrosine 375, isoleucine 391 to valine 417, alanine 439 to histidine 461, and phenylalanine 536 to leucine 554. 2 residues coordinate [4Fe-4S] cluster: cysteine 578 and cysteine 587. 2 helical membrane passes run histidine 594–tryptophan 615 and leucine 669–phenylalanine 691. Chlorophyll a' is bound at residue histidine 680. Chlorophyll a-binding residues include methionine 688 and tyrosine 696. A phylloquinone-binding site is contributed by tryptophan 697. Residues alanine 729–alanine 749 form a helical membrane-spanning segment.

The protein belongs to the PsaA/PsaB family. As to quaternary structure, the PsaA/B heterodimer binds the P700 chlorophyll special pair and subsequent electron acceptors. PSI consists of a core antenna complex that captures photons, and an electron transfer chain that converts photonic excitation into a charge separation. The cyanobacterial PSI reaction center is composed of one copy each of PsaA,B,C,D,E,F,I,J,K,L,M and X, and forms trimeric complexes. Requires PSI electron transfer chain: 5 chlorophyll a, 1 chlorophyll a', 2 phylloquinones and 3 4Fe-4S clusters. PSI core antenna: 90 chlorophyll a, 22 carotenoids, 3 phospholipids and 1 galactolipid. P700 is a chlorophyll a/chlorophyll a' dimer, A0 is one or more chlorophyll a, A1 is one or both phylloquinones and FX is a shared 4Fe-4S iron-sulfur center. as cofactor.

The protein localises to the cellular thylakoid membrane. The enzyme catalyses reduced [plastocyanin] + hnu + oxidized [2Fe-2S]-[ferredoxin] = oxidized [plastocyanin] + reduced [2Fe-2S]-[ferredoxin]. PsaA and PsaB bind P700, the primary electron donor of photosystem I (PSI), as well as the electron acceptors A0, A1 and FX. PSI is a plastocyanin/cytochrome c6-ferredoxin oxidoreductase, converting photonic excitation into a charge separation, which transfers an electron from the donor P700 chlorophyll pair to the spectroscopically characterized acceptors A0, A1, FX, FA and FB in turn. Oxidized P700 is reduced on the lumenal side of the thylakoid membrane by plastocyanin or cytochrome c6. The sequence is that of Photosystem I P700 chlorophyll a apoprotein A1 from Synechococcus sp. (strain JA-2-3B'a(2-13)) (Cyanobacteria bacterium Yellowstone B-Prime).